A 210-amino-acid chain; its full sequence is MHPFFQELQQGSQKLGLSLSDEALTLLLKYQDALVLWNKAYNLTAIRDPKEMLVKHLLDSLSILKDLPAGRLLDVGTGGGMPGMIIALCQPERSCVLLDSNGKKIRFLKQFIADLKLKNVIAVQTRVENQDTIDELGQFDVITSRAFASLTDFVGAARPYLHEQSIIAAMKGLIPVEEMEELKQEFSCKVIELHVPRLDEQRHLLLLQRI.

S-adenosyl-L-methionine-binding positions include Gly-76, Met-81, 127–128, and Arg-145; that span reads VE.

It belongs to the methyltransferase superfamily. RNA methyltransferase RsmG family.

Its subcellular location is the cytoplasm. The enzyme catalyses guanosine(527) in 16S rRNA + S-adenosyl-L-methionine = N(7)-methylguanosine(527) in 16S rRNA + S-adenosyl-L-homocysteine. Specifically methylates the N7 position of guanine in position 527 of 16S rRNA. This is Ribosomal RNA small subunit methyltransferase G from Acinetobacter baumannii (strain SDF).